We begin with the raw amino-acid sequence, 745 residues long: Probable xyloglucan glycosyltransferase 3 (745 aa).

The next 2 helical transmembrane spans lie at 116-136 and 196-216; these read GFLL…LKGW and IDYI…LFMV. Asp300 is a catalytic residue. Asp359 and Asp361 together coordinate substrate. Asp453 is a catalytic residue. 4 helical membrane passes run 531-551, 556-576, 695-715, and 720-740; these read LILP…TMFV, LPIW…ILPA, IFKK…RSLL, and LHFY…LDLI.

This sequence belongs to the glycosyltransferase 2 family. Plant cellulose synthase-like C subfamily.

It is found in the golgi apparatus membrane. Probable beta-1,4-glucan synthase rather involved in the synthesis of the xyloglucan backbone than cellulose. Seems to work simultaneously with xyloglucan 6-xylosyltransferase. Xyloglucan is a noncellulosic polysaccharides of plant cell wall and consists of a glucan backbone substituted by xylose, galactose and fucose. The chain is Probable xyloglucan glycosyltransferase 3 (CSLC3) from Oryza sativa subsp. japonica (Rice).